A 41-amino-acid chain; its full sequence is Cuticle protein 32 (41 aa).

A run of 4 repeats spans residues 17–20, 25–28, 31–34, and 38–41.

In terms of biological role, component of the cuticle of migratory locust which contains more than 100 different structural proteins. This chain is Cuticle protein 32, found in Locusta migratoria (Migratory locust).